A 260-amino-acid chain; its full sequence is Global transcriptional regulator CodY (260 aa).

The segment at 1 to 159 (MPNLLEKTRK…SSTVVGIQLL (159 aa)) is GAF domain. Positions 207 to 226 (ASVIADRIGITRSVIVNALR) form a DNA-binding region, H-T-H motif.

The protein belongs to the CodY family.

Its subcellular location is the cytoplasm. In terms of biological role, DNA-binding global transcriptional regulator which is involved in the adaptive response to starvation and acts by directly or indirectly controlling the expression of numerous genes in response to nutrient availability. During rapid exponential growth, CodY is highly active and represses genes whose products allow adaptation to nutrient depletion. This chain is Global transcriptional regulator CodY, found in Streptococcus uberis (strain ATCC BAA-854 / 0140J).